Consider the following 346-residue polypeptide: Putative D-alanine--D-lactate ligase (346 aa).

Residues 137–338 (YVVARSAGIA…LSEVIDRTLS (202 aa)) form the ATP-grasp domain. 163 to 216 (RLTYPVFVKPARSGSSFGVSKVCRPEDLATAVESARRYDTKVLIEAAVVGSEVG) provides a ligand contact to ATP. Residues Asp-292, Glu-305, and Asn-307 each coordinate Mg(2+).

Belongs to the D-alanine--D-alanine ligase family. It depends on Mg(2+) as a cofactor. Mn(2+) serves as cofactor.

It is found in the cell membrane. Functionally, required for resistance to glycopeptides antibiotics. D-Ala--D-Ala ligase of altered specificity which catalyzes ester bond formation between D-Ala and various D-hydroxy acids; producing a peptidoglycan which does not terminate by D-alanine but by D-lactate, thus preventing vancomycin binding. In Streptomyces coelicolor (strain ATCC BAA-471 / A3(2) / M145), this protein is Putative D-alanine--D-lactate ligase.